Reading from the N-terminus, the 785-residue chain is MEKKYKNIVLLKGLEVINDYHFRMVKSLLSNDLKLNLKMREEYDKIQIADLMEEKFRGDAGLGKLIQIFKDIPTLEDLAETLKKEKLKAKGLAPSRKRKKEVDAASPAPSTSSTVKTEGAEATPGAQKRKKTTKEKSGPKGSKVSKEQTQPPCPAGAGMSTAMGRSPSPKTSSSAPPNTSSTENPKTVAKCQATPRRSVLQKGPVIVKVLSTTKPFEYETPEMEKKIMFHATVATQTQFFHVKVLNTSLKEKFNGKKIIIISDYLEYDSLLEVNEESTVSEAGPNQKFEVPNKIINRAKETLKIDILHKQASGNIVYGVFTLHKKTVNQKTTIYKIQDDRGKMDVVGTGQCHNIPCEEGDKLQLYCFRLRKKNQMSTLISEMHSFIQIKKKTNPRNNDPKSMKLPQEQSQLPNPSEAGTTFPESHLWTPQMPPTTPSSSFFTKKSEDTISKMNDFMRMQILKEESHFPGPFMTSIGPAESYPHTPQMPPSTPSSSFLTTKSEDTISKMNDFMRMQILKEESHFPRPFMTSIGPAESYPHTPQMPPSTPSSSFLTTWKPKLQTEPEEVSIEDSAQSDLKEVMVLNATESFVYEPKEQKKMFHATVATEKEVFRVKVFNIDLKEKFTPKKIIAISNYVCRNGFLEVYPFTLVADVNADPKMEIPKGLIRSANITPKINQLCSQTKGSFVNGVFEVHKKNVRGEFTYYEIQDNTGKMEVVVHGRLTTINCEEGDKLKLTCFELAPKSGNTGELRSVIHSHIKVIKTRKNKKDILNPDSSMETSPDFFF.

Residues 5 to 92 (YKNIVLLKGL…KKEKLKAKGL (88 aa)) enclose the Pyrin domain. K45 bears the N6-acetyllysine mark. Residues 88–99 (KAKGLAPSRKRK) show a composition bias toward basic residues. Residues 88–196 (KAKGLAPSRK…TVAKCQATPR (109 aa)) are disordered. S95 carries the post-translational modification Phosphoserine. Positions 96-100 (RKRKK) match the Nuclear localization signal motif. The residue at position 99 (K99) is an N6-acetyllysine. Over residues 104–114 (AASPAPSTSST) the composition is skewed to low complexity. Phosphoserine is present on S106. Residue K116 forms a Glycyl lysine isopeptide (Lys-Gly) (interchain with G-Cter in SUMO2) linkage. N6-acetyllysine; alternate is present on K128. K128 participates in a covalent cross-link: Glycyl lysine isopeptide (Lys-Gly) (interchain with G-Cter in SUMO2); alternate. 3 consecutive short sequence motifs (nuclear localization signal) follow at residues 128–131 (KRKK), 134–136 (KEK), and 140–143 (KGSK). Over residues 166-182 (SPSPKTSSSAPPNTSST) the composition is skewed to low complexity. Residues S168 and S174 each carry the phosphoserine modification. The interval 192-393 (QATPRRSVLQ…SFIQIKKKTN (202 aa)) is interaction with TP53 C-terminus. The HIN-200 1 domain maps to 193-393 (ATPRRSVLQK…SFIQIKKKTN (201 aa)). K214 bears the N6-acetyllysine mark. The segment at 388 to 442 (IKKKTNPRNNDPKSMKLPQEQSQLPNPSEAGTTFPESHLWTPQMPPTTPSSSFFT) is disordered. A compositionally biased stretch (polar residues) spans 406–422 (QEQSQLPNPSEAGTTFP). Residues K444 and K451 each carry the N6-acetyllysine modification. Residues 566 to 765 (EVSIEDSAQS…SHIKVIKTRK (200 aa)) form the HIN-200 2 domain. Positions 571–766 (DSAQSDLKEV…HIKVIKTRKN (196 aa)) are interaction with TP53 core domain. At S575 the chain carries Phosphoserine. 2 positions are modified to N6-acetyllysine: K598 and K614. K683 is covalently cross-linked (Glycyl lysine isopeptide (Lys-Gly) (interchain with G-Cter in SUMO2)). S780 is subject to Phosphoserine.

The protein belongs to the HIN-200 family. Forms homooligomers. Interacts with TMEM173, AIM2, PYCARD and CASP1. Interacts with BRCA1, TP53, E2F1, RB1 and SP1. Interacts with MTA1. Interacts with MTA1. Interacts with PYDC5. Lysine acetylation in the multipartite nuclear localization signal (NLS) regulates the subcellular location. Post-translationally, phosphorylated on Ser and Thr.

The protein localises to the nucleus. It localises to the cytoplasm. Binds double-stranded DNA. Binds preferentially to supercoiled DNA and cruciform DNA structures. Seems to be involved in transcriptional regulation. May function as a transcriptional repressor. Could have a role in the regulation of hematopoietic differentiation through activation of unknown target genes. Controls cellular proliferation by modulating the functions of cell cycle regulatory factors including p53/TP53 and the retinoblastoma protein. May be involved in TP53-mediated transcriptional activation by enhancing TP53 sequence-specific DNA binding and modulating TP53 phosphorylation status. Seems to be involved in energy-level-dependent activation of the ATM/ AMPK/TP53 pathway coupled to regulation of autophagy. May be involved in regulation of TP53-mediated cell death also involving BRCA1. May be involved in the senescence of prostate epithelial cells. Involved in innate immune response by recognizing viral dsDNA in the cytosol and probably in the nucleus. After binding to viral DNA in the cytoplasm recruits TMEM173/STING and mediates the induction of IFN-beta. Has anti-inflammatory activity and inhibits the activation of the AIM2 inflammasome, probably via association with AIM2. Proposed to bind viral DNA in the nucleus and to induce the formation of nuclear caspase-1-activating inflammasome formation via association with PYCARD. Inhibits replication of herpesviruses probably by interfering with promoter recruitment of members of the Sp1 family of transcription factors. In Pongo abelii (Sumatran orangutan), this protein is Gamma-interferon-inducible protein 16 (IFI16).